A 338-amino-acid polypeptide reads, in one-letter code: Glyceraldehyde-3-phosphate dehydrogenase (338 aa).

NAD(+) contacts are provided by residues 12–13 (RI), aspartate 34, and arginine 79. Residues 150-152 (SCT), threonine 181, 210-211 (TG), and arginine 233 each bind D-glyceraldehyde 3-phosphate. Cysteine 151 serves as the catalytic Nucleophile. Residue asparagine 315 participates in NAD(+) binding.

The protein belongs to the glyceraldehyde-3-phosphate dehydrogenase family. As to quaternary structure, homotetramer.

Its subcellular location is the cytoplasm. It carries out the reaction D-glyceraldehyde 3-phosphate + phosphate + NAD(+) = (2R)-3-phospho-glyceroyl phosphate + NADH + H(+). It participates in carbohydrate degradation; glycolysis; pyruvate from D-glyceraldehyde 3-phosphate: step 1/5. This chain is Glyceraldehyde-3-phosphate dehydrogenase (gpd1), found in Hypocrea atroviridis (Trichoderma atroviride).